A 340-amino-acid chain; its full sequence is DnaJ homolog subfamily B member 1 (340 aa).

One can recognise a J domain in the interval 2–70 (GKDYYQTLGL…REIFDRYGEE (69 aa)). Thr-307 carries the post-translational modification Phosphothreonine.

In terms of assembly, interacts with DNAJC3. Interacts with HSF1 (via transactivation domain); this interaction results in the inhibition of heat shock- and HSF1-induced transcriptional activity during the attenuation and recovery phase period of the heat shock response. Interacts with BAG3.

The protein localises to the cytoplasm. The protein resides in the nucleus. Its subcellular location is the nucleolus. Its function is as follows. Interacts with HSP70 and can stimulate its ATPase activity. Stimulates the association between HSC70 and HIP. Negatively regulates heat shock-induced HSF1 transcriptional activity during the attenuation and recovery phase period of the heat shock response. Stimulates ATP hydrolysis and the folding of unfolded proteins mediated by HSPA1A/B (in vitro). In Homo sapiens (Human), this protein is DnaJ homolog subfamily B member 1 (DNAJB1).